A 470-amino-acid chain; its full sequence is Rhamnulokinase (470 aa).

Ala12–Arg16 provides a ligand contact to ATP. Substrate contacts are provided by residues Ala80 and His237–Thr239. Asp238 (proton acceptor) is an active-site residue. Thr259 provides a ligand contact to ATP. Residue Asn296 participates in substrate binding. Position 304 (Gln304) interacts with ATP. Cysteines 353 and 370 form a disulfide. Position 402 (Gly402) interacts with ATP.

The protein belongs to the rhamnulokinase family. Requires Mg(2+) as cofactor.

The catalysed reaction is L-rhamnulose + ATP = L-rhamnulose 1-phosphate + ADP + H(+). It functions in the pathway carbohydrate degradation; L-rhamnose degradation; glycerone phosphate from L-rhamnose: step 2/3. Functionally, involved in the catabolism of L-rhamnose (6-deoxy-L-mannose). Catalyzes the transfer of the gamma-phosphate group from ATP to the 1-hydroxyl group of L-rhamnulose to yield L-rhamnulose 1-phosphate. The protein is Rhamnulokinase of Oceanobacillus iheyensis (strain DSM 14371 / CIP 107618 / JCM 11309 / KCTC 3954 / HTE831).